The sequence spans 239 residues: MRIIGLTGSIASGKSTVSAMLREPGAAVIDADAIVHHLQLPGTPVFESIVREFGPGVVRPDGSLDRQALGRIVFADPGRRRALEAIVHPAVRAEIWRQVEQYRREGRPAVVLDVPLLYESGWDRQVDEVWVVWVDAETQKARLIARSGLSPEEAEARIAAQMSLDEKARRADRIIDNRGSLDRTRAQVEAAWRAACGGEGGEPAAGSSAHHGAGSVDPGAGPCDGPGAAPEAERRGGDR.

The region spanning 3 to 206 (IIGLTGSIAS…GGEGGEPAAG (204 aa)) is the DPCK domain. An ATP-binding site is contributed by 11-16 (ASGKST). The tract at residues 197–239 (GGEGGEPAAGSSAHHGAGSVDPGAGPCDGPGAAPEAERRGGDR) is disordered. The segment covering 204–230 (AAGSSAHHGAGSVDPGAGPCDGPGAAP) has biased composition (low complexity).

Belongs to the CoaE family.

Its subcellular location is the cytoplasm. The catalysed reaction is 3'-dephospho-CoA + ATP = ADP + CoA + H(+). The protein operates within cofactor biosynthesis; coenzyme A biosynthesis; CoA from (R)-pantothenate: step 5/5. Functionally, catalyzes the phosphorylation of the 3'-hydroxyl group of dephosphocoenzyme A to form coenzyme A. The protein is Dephospho-CoA kinase of Symbiobacterium thermophilum (strain DSM 24528 / JCM 14929 / IAM 14863 / T).